A 782-amino-acid chain; its full sequence is Endonuclease MutS2 (782 aa).

336-343 (GPNTGGKT) is an ATP binding site. One can recognise a Smr domain in the interval 707 to 782 (LDLRGYRYED…GFGVTVATLK (76 aa)).

It belongs to the DNA mismatch repair MutS family. MutS2 subfamily. In terms of assembly, homodimer. Binds to stalled ribosomes, contacting rRNA.

Functionally, endonuclease that is involved in the suppression of homologous recombination and thus may have a key role in the control of bacterial genetic diversity. In terms of biological role, acts as a ribosome collision sensor, splitting the ribosome into its 2 subunits. Detects stalled/collided 70S ribosomes which it binds and splits by an ATP-hydrolysis driven conformational change. Acts upstream of the ribosome quality control system (RQC), a ribosome-associated complex that mediates the extraction of incompletely synthesized nascent chains from stalled ribosomes and their subsequent degradation. Probably generates substrates for RQC. In Staphylococcus aureus (strain COL), this protein is Endonuclease MutS2.